A 123-amino-acid polypeptide reads, in one-letter code: uncharacterized protein (123 aa).

A disordered region spans residues Pro34–Glu123. Composition is skewed to basic and acidic residues over residues Lys50 to Pro60, Thr74 to Gln100, and Glu107 to Glu123.

It is found in the mitochondrion. This is an uncharacterized protein from Schizosaccharomyces pombe (strain 972 / ATCC 24843) (Fission yeast).